We begin with the raw amino-acid sequence, 242 residues long: Biosynthetic peptidoglycan transglycosylase (242 aa).

Residues 15–35 (FLLLLMVVLAVFWGGGIALFS) form a helical membrane-spanning segment.

This sequence belongs to the glycosyltransferase 51 family.

The protein localises to the cell inner membrane. The catalysed reaction is [GlcNAc-(1-&gt;4)-Mur2Ac(oyl-L-Ala-gamma-D-Glu-L-Lys-D-Ala-D-Ala)](n)-di-trans,octa-cis-undecaprenyl diphosphate + beta-D-GlcNAc-(1-&gt;4)-Mur2Ac(oyl-L-Ala-gamma-D-Glu-L-Lys-D-Ala-D-Ala)-di-trans,octa-cis-undecaprenyl diphosphate = [GlcNAc-(1-&gt;4)-Mur2Ac(oyl-L-Ala-gamma-D-Glu-L-Lys-D-Ala-D-Ala)](n+1)-di-trans,octa-cis-undecaprenyl diphosphate + di-trans,octa-cis-undecaprenyl diphosphate + H(+). It functions in the pathway cell wall biogenesis; peptidoglycan biosynthesis. Its function is as follows. Peptidoglycan polymerase that catalyzes glycan chain elongation from lipid-linked precursors. The sequence is that of Biosynthetic peptidoglycan transglycosylase from Shigella sonnei (strain Ss046).